Here is a 149-residue protein sequence, read N- to C-terminus: Transcriptional repressor NrdR (149 aa).

The segment at 3–34 is a zinc-finger region; it reads CPFCSAVDTKVIDSRLVGEGSQVRRRRQCLVC. In terms of domain architecture, ATP-cone spans 49–139; the sequence is PRVIKSNEVR…VYRSFEDIRE (91 aa).

The protein belongs to the NrdR family. Zn(2+) serves as cofactor.

Its function is as follows. Negatively regulates transcription of bacterial ribonucleotide reductase nrd genes and operons by binding to NrdR-boxes. The polypeptide is Transcriptional repressor NrdR (Pectobacterium atrosepticum (strain SCRI 1043 / ATCC BAA-672) (Erwinia carotovora subsp. atroseptica)).